A 266-amino-acid polypeptide reads, in one-letter code: Small ribosomal subunit protein uS3 (266 aa).

Residues 39–107 form the KH type-2 domain; sequence VREYLKKKLK…PVHVNIEEIR (69 aa). The segment at 218 to 266 is disordered; it reads EVAEDKRPRRNARPGDRRPRRDGEGGAPGARRGAPRRGAGKPEDGKTGE. Basic and acidic residues-rich tracts occupy residues 230–241 and 257–266; these read RPGDRRPRRDGE and GKPEDGKTGE.

It belongs to the universal ribosomal protein uS3 family. As to quaternary structure, part of the 30S ribosomal subunit. Forms a tight complex with proteins S10 and S14.

In terms of biological role, binds the lower part of the 30S subunit head. Binds mRNA in the 70S ribosome, positioning it for translation. This chain is Small ribosomal subunit protein uS3, found in Burkholderia ambifaria (strain MC40-6).